A 34-amino-acid polypeptide reads, in one-letter code: Omega/M-ectatotoxin-Et1a subunit B (34 aa).

Cys-10 and Cys-32 are disulfide-bonded.

The protein belongs to the ectatomin family. Ectatomin-Et subfamily. In terms of assembly, heterodimer of an A and a B chain; disulfide-linked. As to expression, expressed by the venom gland.

The protein resides in the secreted. It is found in the target cell membrane. In terms of biological role, algogenic for animals, human and insects. At high concentrations (0.5-1 uM), it acts as a pore-forming protein that forms nonselective cation channels both in cell and artificial membranes. It is weakly selective for cation over anions channel conductance is identical in both directions. At lower concentrations (1-10 nM), this heterodimer inhibits cardiac L-type calcium currents in isolated rat cardiac ventricular myocytes. The polypeptide is Omega/M-ectatotoxin-Et1a subunit B (Ectatomma tuberculatum (Selva ant)).